Reading from the N-terminus, the 80-residue chain is D-alanyl carrier protein 2 (80 aa).

The 80-residue stretch at 1-80 (MIMDDVKATV…KIVAKVASLQ (80 aa)) folds into the Carrier domain. Ser38 carries the post-translational modification O-(pantetheine 4'-phosphoryl)serine.

This sequence belongs to the DltC family. 4'-phosphopantetheine is transferred from CoA to a specific serine of apo-DCP.

The protein localises to the cytoplasm. Its pathway is cell wall biogenesis; lipoteichoic acid biosynthesis. Carrier protein involved in the D-alanylation of lipoteichoic acid (LTA). The loading of thioester-linked D-alanine onto DltC is catalyzed by D-alanine--D-alanyl carrier protein ligase DltA. The DltC-carried D-alanyl group is further transferred to cell membrane phosphatidylglycerol (PG) by forming an ester bond, probably catalyzed by DltD. D-alanylation of LTA plays an important role in modulating the properties of the cell wall in Gram-positive bacteria, influencing the net charge of the cell wall. The sequence is that of D-alanyl carrier protein 2 from Lactiplantibacillus plantarum (strain ATCC BAA-793 / NCIMB 8826 / WCFS1) (Lactobacillus plantarum).